Consider the following 160-residue polypeptide: Large ribosomal subunit protein eL21 (160 aa).

Basic and acidic residues-rich tracts occupy residues 112 to 123 (NDQKKKEAKEKG) and 136 to 145 (REAHFVRTNG). The interval 112-145 (NDQKKKEAKEKGTWVQLKRQPAPPREAHFVRTNG) is disordered.

Belongs to the eukaryotic ribosomal protein eL21 family. In terms of assembly, component of the large ribosomal subunit.

Its subcellular location is the cytoplasm. It is found in the cytosol. The protein resides in the endoplasmic reticulum. Its function is as follows. Component of the large ribosomal subunit. The ribosome is a large ribonucleoprotein complex responsible for the synthesis of proteins in the cell. The protein is Large ribosomal subunit protein eL21 (RPL21) of Oryctolagus cuniculus (Rabbit).